The primary structure comprises 177 residues: MADGTVILDTAGVKRALTRIAHEILERNKGVDGLVLVGIRTGGVHLAREIVARLEEIEGATVPVGEVDITLYRDDFKGHAPHLPVGKTDIPFSLETKRVVLVDDVLFTGRTIRAAMDAIMDHGRPACIQLAVLVDRGHRELPIRADFVGRNVPTSLKEKIAVLFDAANRPTDVVLEK.

A PRPP-binding motif is present at residues 99–111 (VVLVDDVLFTGRT).

This sequence belongs to the purine/pyrimidine phosphoribosyltransferase family. PyrR subfamily.

The catalysed reaction is UMP + diphosphate = 5-phospho-alpha-D-ribose 1-diphosphate + uracil. Its function is as follows. Regulates the transcription of the pyrimidine nucleotide (pyr) operon in response to exogenous pyrimidines. In terms of biological role, also displays a weak uracil phosphoribosyltransferase activity which is not physiologically significant. This is Bifunctional protein PyrR from Geobacter sulfurreducens (strain ATCC 51573 / DSM 12127 / PCA).